Consider the following 546-residue polypeptide: Nuclear pore complex protein Nup58 (546 aa).

Repeat copies occupy residues 22 to 23 (FG), 36 to 37 (FG), 45 to 46 (FG), 64 to 65 (FG), 73 to 74 (FG), 82 to 83 (FG), 92 to 93 (FG), 101 to 102 (FG), 110 to 111 (FG), 119 to 120 (FG), 128 to 129 (FG), 137 to 138 (FG), 146 to 147 (FG), 155 to 156 (FG), 166 to 167 (FG), 197 to 198 (FG), and 199 to 200 (FG). Residues 22 to 200 (FGARPATTTA…TTAPPAFGFG (179 aa)) are 17 X 2 AA repeats of F-G.

It belongs to the NUP58 family. In terms of assembly, component of the nuclear pore complex. Interacts with Nup54. Interacts (via C-terminus) with fs(1)Yb; this interaction occurs in a RNA-independent manner. Interacts with sbr/nxf1. Interacts with Nxt1. O-glycosylated; contains O-GlcNAc. O-GlcNAcylation increases with increasing ambient temperature.

It localises to the nucleus. Its subcellular location is the nuclear pore complex. In terms of biological role, component of the nuclear pore complex, a complex required for the trafficking across the nuclear membrane. Together with Nup54, required for transposable element silencing regulation in ovarian follicle cells. By interacting with the nuclear (Nxf1/Nxt1) and cytosolic (fs(1)Yb) components of the flamenco (flam) transcripts processing pathway, enables export and subsequent piRNA production. This chain is Nuclear pore complex protein Nup58, found in Drosophila melanogaster (Fruit fly).